The chain runs to 86 residues: Secreted transmembrane peptide 6 (86 aa).

Positions methionine 1 to serine 31 are cleaved as a signal peptide. The SCOOP motif signature appears at isoleucine 45–proline 58. Positions serine 51–serine 53 match the SxS motif essential for MIK2 binding motif.

Belongs to the serine rich endogenous peptide (SCOOP) phytocytokine family. Interacts with MIK2 (via extracellular leucine-rich repeat domain); this interaction triggers the formation of complex between MIK2 and the BAK1/SERK3 and SERK4 coreceptors, and subsequent BAK1 activation by phosphorylation. As to expression, mostly expressed in leaves, and, to a lower extent, in roots, stems, siliques, seeds and flowers.

Its subcellular location is the cell membrane. It localises to the secreted. The protein localises to the extracellular space. The protein resides in the apoplast. Functionally, brassicaceae-specific phytocytokine (plant endogenous peptide released into the apoplast) perceived by MIK2 in a BAK1/SERK3 and SERK4 coreceptors-dependent manner, that modulates various physiological and antimicrobial processes including growth prevention and reactive oxygen species (ROS) response regulation. Prevents general growth and development. The chain is Secreted transmembrane peptide 6 from Arabidopsis thaliana (Mouse-ear cress).